The primary structure comprises 355 residues: Histidinol-phosphate aminotransferase 2 (355 aa).

K213 is subject to N6-(pyridoxal phosphate)lysine.

This sequence belongs to the class-II pyridoxal-phosphate-dependent aminotransferase family. Histidinol-phosphate aminotransferase subfamily. As to quaternary structure, homodimer. Pyridoxal 5'-phosphate is required as a cofactor.

The catalysed reaction is L-histidinol phosphate + 2-oxoglutarate = 3-(imidazol-4-yl)-2-oxopropyl phosphate + L-glutamate. The protein operates within amino-acid biosynthesis; L-histidine biosynthesis; L-histidine from 5-phospho-alpha-D-ribose 1-diphosphate: step 7/9. The polypeptide is Histidinol-phosphate aminotransferase 2 (Burkholderia lata (strain ATCC 17760 / DSM 23089 / LMG 22485 / NCIMB 9086 / R18194 / 383)).